Here is a 93-residue protein sequence, read N- to C-terminus: Muconolactone Delta-isomerase (93 aa).

This sequence belongs to the muconolactone Delta-isomerase family. Homodecamer.

The enzyme catalyses (S)-muconolactone = (4,5-dihydro-5-oxofuran-2-yl)-acetate. The protein operates within aromatic compound metabolism; beta-ketoadipate pathway; 5-oxo-4,5-dihydro-2-furylacetate from catechol: step 3/3. In Rhodococcus opacus (Nocardia opaca), this protein is Muconolactone Delta-isomerase (catC).